Reading from the N-terminus, the 401-residue chain is MRTLWQHCHVATMADGRYSAIEDAAIVTSAGLIEWIGPRAELAPVEADRTVDLGGAWVTPGLIDCHTHAVFGGNRSGEFEQRLQGVSYAEIAAQGGGIASTVRATRAASEDELFASAHQRVQALMRDGVTTLEIKSGYGLDLANERKMLRVARRLADELPLTVRATCLAAHALPPEYAGRADDYIAHICDEMLPALAGEGLVDAVDAFCEHLAFSPAQVERLFIKARELGLPVKLHAEQLSSLHGSSLAARYQALSADHLEFMTEEDAVAMASAGTVAVLLPGAFYFLRETQLPPMDALRRHGVKIALASDLNPGTSPGLSLRLMLNMGCTCFRMTPEEALAGVTVHAATALGLGDSHGSLQVGKVADFVAWQIERPADLAYWLGGDLPKRVVRMGHEISN.

Residues His66 and His68 each contribute to the Fe(3+) site. Zn(2+)-binding residues include His66 and His68. Arg75, Tyr138, and His171 together coordinate 4-imidazolone-5-propanoate. Tyr138 provides a ligand contact to N-formimidoyl-L-glutamate. Position 236 (His236) interacts with Fe(3+). A Zn(2+)-binding site is contributed by His236. A 4-imidazolone-5-propanoate-binding site is contributed by Gln239. Asp311 is a Fe(3+) binding site. Asp311 contributes to the Zn(2+) binding site. 2 residues coordinate N-formimidoyl-L-glutamate: Asn313 and Gly315. 4-imidazolone-5-propanoate is bound at residue Thr316.

This sequence belongs to the metallo-dependent hydrolases superfamily. HutI family. Requires Zn(2+) as cofactor. The cofactor is Fe(3+).

It localises to the cytoplasm. The catalysed reaction is 4-imidazolone-5-propanoate + H2O = N-formimidoyl-L-glutamate. The protein operates within amino-acid degradation; L-histidine degradation into L-glutamate; N-formimidoyl-L-glutamate from L-histidine: step 3/3. Catalyzes the hydrolytic cleavage of the carbon-nitrogen bond in imidazolone-5-propanoate to yield N-formimidoyl-L-glutamate. It is the third step in the universal histidine degradation pathway. This Pseudomonas putida (strain ATCC 47054 / DSM 6125 / CFBP 8728 / NCIMB 11950 / KT2440) protein is Imidazolonepropionase.